The chain runs to 902 residues: Leucine-rich repeat-containing G-protein coupled receptor 5A (902 aa).

The N-terminal stretch at 1–22 (MDTSRTSLFLCSVLYSLQLVGS) is a signal peptide. At 23 to 557 (ARPGKQHRSC…DHLFGSWLTR (535 aa)) the chain is on the extracellular side. Cystine bridges form between C32–C38 and C36–C49. The 30-residue stretch at 32–61 (CPTPCECEQDGMLVRVDCSDRGLTGLPRNI) folds into the LRRNT domain. LRR repeat units follow at residues 41–61 (DGML…PRNI), 62–85 (SIFT…ALHN), 86–109 (LHFL…AFAG), 111–133 (GSLK…ALQN), 134–157 (LRSL…SFNG), 159–181 (FSLR…ALES), 182–205 (LSAL…AFGN), 207–229 (SSLV…CFDG), 230–253 (LHSL…IKTL), 254–276 (KNLK…AFIG), 278–300 (PSLI…AFQH), 301–324 (LPEL…LTGT), 325–347 (TSLE…VCNQ), 348–372 (LPNL…GCQR), 374–393 (QKID…TFQQ), 394–417 (LVGL…SFSS), and 418–441 (LPSL…GLHG). 2 N-linked (GlcNAc...) asparagine glycosylation sites follow: N60 and N74. N205 carries N-linked (GlcNAc...) asparagine glycosylation. C345 and C370 form a disulfide bridge. C476 and C537 are joined by a disulfide. N496 carries N-linked (GlcNAc...) asparagine glycosylation. A helical membrane pass occupies residues 558–578 (IGVWLIVLLSFVCNALVIATV). The Cytoplasmic portion of the chain corresponds to 579–589 (FRPLSYVPSIK). Residues 590–610 (LLIGLIAIINTLMGLSSGVLA) form a helical membrane-spanning segment. An LRR 18 repeat occupies 598-619 (INTLMGLSSGVLATVDALTFGN). Topologically, residues 611-634 (TVDALTFGNFAQYGAWWESGVGCQ) are extracellular. C633 and C708 are disulfide-bonded. The helical transmembrane segment at 635–655 (ITGFLSVFAAETSVFLLTVAA) threads the bilayer. The Cytoplasmic segment spans residues 656–678 (LERGFSIKCTTKFETKSSFLSVK). The helical transmembrane segment at 679-699 (LSIVFCFLLSIIIAVSPLMSG) threads the bilayer. The Extracellular segment spans residues 700 to 718 (STYGTSPFCFPLLFGDPSS). Residues 719–739 (MVFMVALVLLNSLCFLVMTVA) traverse the membrane as a helical segment. Over 740–763 (YTKLYCSLEKGELENVWDCSMVKH) the chain is Cytoplasmic. A helical membrane pass occupies residues 764 to 784 (IALLLFTNCILYCPVAFLSFS). The Extracellular segment spans residues 785–798 (SLLNLTFISPEVNK). N-linked (GlcNAc...) asparagine glycans are attached at residues N788 and N797. A helical membrane pass occupies residues 799–819 (SILLLIIPLPACLNPLLYILF). Residues 820 to 902 (NPHFKEDIGS…LSAVAFVPCH (83 aa)) are Cytoplasmic-facing.

The protein belongs to the G-protein coupled receptor 1 family. Expressed in the developing epithelial stem cells of the intestine.

The protein localises to the cell membrane. It localises to the golgi apparatus. Its subcellular location is the trans-Golgi network membrane. In terms of biological role, receptor for R-spondins that potentiates the canonical Wnt signaling pathway and acts as a stem cell marker of the intestinal epithelium and the hair follicle. Upon binding to R-spondins (RSPO1, RSPO2, RSPO3 or RSPO4), associates with phosphorylated LRP6 and frizzled receptors that are activated by extracellular Wnt receptors, triggering the canonical Wnt signaling pathway to increase expression of target genes. In contrast to classical G-protein coupled receptors, does not activate heterotrimeric G-proteins to transduce the signal. Involved in the development and/or maintenance of the adult intestinal stem cells during postembryonic development. This Xenopus laevis (African clawed frog) protein is Leucine-rich repeat-containing G-protein coupled receptor 5A (lgr5-a).